A 127-amino-acid polypeptide reads, in one-letter code: Aspartate 1-decarboxylase (127 aa).

The Schiff-base intermediate with substrate; via pyruvic acid role is filled by serine 25. Serine 25 carries the post-translational modification Pyruvic acid (Ser). Residue threonine 57 participates in substrate binding. The Proton donor role is filled by tyrosine 58. A substrate-binding site is contributed by 73-75 (GAA).

It belongs to the PanD family. In terms of assembly, heterooctamer of four alpha and four beta subunits. Pyruvate is required as a cofactor. Post-translationally, is synthesized initially as an inactive proenzyme, which is activated by self-cleavage at a specific serine bond to produce a beta-subunit with a hydroxyl group at its C-terminus and an alpha-subunit with a pyruvoyl group at its N-terminus.

The protein resides in the cytoplasm. It catalyses the reaction L-aspartate + H(+) = beta-alanine + CO2. Its pathway is cofactor biosynthesis; (R)-pantothenate biosynthesis; beta-alanine from L-aspartate: step 1/1. In terms of biological role, catalyzes the pyruvoyl-dependent decarboxylation of aspartate to produce beta-alanine. The polypeptide is Aspartate 1-decarboxylase (Bacillus licheniformis (strain ATCC 14580 / DSM 13 / JCM 2505 / CCUG 7422 / NBRC 12200 / NCIMB 9375 / NCTC 10341 / NRRL NRS-1264 / Gibson 46)).